Consider the following 435-residue polypeptide: MTPQIKTHLLPKQEPSSSENHGSSTSGIVFNVSTSIIGAGIMSMPAAFKVLGIVPAFLIITIIAWLSTISVGFLMKSTLAGESTTYAGVMKESFGKTGSIAVQIATMVATFGCMIIFSIIIGDVLSGNENGGPEHIGVLQEWFGSYWWNTRIFALLFVYGFVLLPLVLRRRVERLAISSAVSFLLAVLFVVISSVLAISALVNGQTKNPRLFPELSNGGSFWQLFTASPVIVTAFTFHFNVHPIGFELKDPLQVIPATKISVILCAAIYFATGLFGYLLFGDATMSDILVNFDQSSGSSIGSLLNDIVRLSYVLHLMLVFPLLNFSLRANLDELLYPKKPSLEKDTKRFIGLTLALLICCFLSAIAVPDIWYFFQFMGSTITVSIAFIFPAAIVLRNIHGVSTSREKIVAAIMLVLAVATSIIAISTNLYSLAAN.

Positions 1–24 (MTPQIKTHLLPKQEPSSSENHGSS) are disordered. The next 11 membrane-spanning stretches (helical) occupy residues 28-48 (IVFNVSTSIIGAGIMSMPAAF), 53-73 (IVPAFLIITIIAWLSTISVGF), 100-120 (IAVQIATMVATFGCMIIFSII), 148-168 (WNTRIFALLFVYGFVLLPLVL), 181-201 (VSFLLAVLFVVISSVLAISAL), 219-239 (GSFWQLFTASPVIVTAFTFHF), 260-280 (ISVILCAAIYFATGLFGYLLF), 307-327 (IVRLSYVLHLMLVFPLLNFSL), 354-374 (LALLICCFLSAIAVPDIWYFF), 375-395 (QFMGSTITVSIAFIFPAAIVL), and 408-428 (IVAAIMLVLAVATSIIAISTN).

The protein belongs to the amino acid/polyamine transporter 2 family. Amino acid/auxin permease (AAAP) (TC 2.A.18.6) subfamily.

Its subcellular location is the membrane. This Arabidopsis thaliana (Mouse-ear cress) protein is Amino acid transporter AVT6C.